The sequence spans 180 residues: MRILGIDPGLRVTGFGVIDVSGHQLAYVASGVIRTPTADLATRLGTIFAGVSTLVREHAPDQAAIEKVFVNVNPQSTLLLGQARGAAICGLVSGGLPVAEYTALQLKQAIVGYGRATKAQMQEMVTRLLSLSGQPGSDAADALGIAICHAHGGNTLSTLGGLAPALAQKGLRLRRGRLVG.

Active-site residues include Asp7, Glu66, and Asp138. Mg(2+) is bound by residues Asp7, Glu66, and Asp138.

This sequence belongs to the RuvC family. As to quaternary structure, homodimer which binds Holliday junction (HJ) DNA. The HJ becomes 2-fold symmetrical on binding to RuvC with unstacked arms; it has a different conformation from HJ DNA in complex with RuvA. In the full resolvosome a probable DNA-RuvA(4)-RuvB(12)-RuvC(2) complex forms which resolves the HJ. Requires Mg(2+) as cofactor.

Its subcellular location is the cytoplasm. It carries out the reaction Endonucleolytic cleavage at a junction such as a reciprocal single-stranded crossover between two homologous DNA duplexes (Holliday junction).. Functionally, the RuvA-RuvB-RuvC complex processes Holliday junction (HJ) DNA during genetic recombination and DNA repair. Endonuclease that resolves HJ intermediates. Cleaves cruciform DNA by making single-stranded nicks across the HJ at symmetrical positions within the homologous arms, yielding a 5'-phosphate and a 3'-hydroxyl group; requires a central core of homology in the junction. The consensus cleavage sequence is 5'-(A/T)TT(C/G)-3'. Cleavage occurs on the 3'-side of the TT dinucleotide at the point of strand exchange. HJ branch migration catalyzed by RuvA-RuvB allows RuvC to scan DNA until it finds its consensus sequence, where it cleaves and resolves the cruciform DNA. In Burkholderia multivorans (strain ATCC 17616 / 249), this protein is Crossover junction endodeoxyribonuclease RuvC.